A 188-amino-acid chain; its full sequence is Ribosome hibernation promotion factor (188 aa).

The tract at residues 93 to 125 (KTRVNRKKRKESEHEPFPATPETPPETAVDHDK) is disordered.

The protein belongs to the HPF/YfiA ribosome-associated protein family. Long HPF subfamily. In terms of assembly, interacts with 100S ribosomes.

The protein localises to the cytoplasm. Its function is as follows. Required for dimerization of active 70S ribosomes into 100S ribosomes in stationary phase; 100S ribosomes are translationally inactive and sometimes present during exponential growth. The chain is Ribosome hibernation promotion factor from Staphylococcus carnosus (strain TM300).